The primary structure comprises 492 residues: Protein kinase US3 homolog (492 aa).

Residues 99–137 are disordered; the sequence is ADLHESQRGQPSGATDSQASTLETESAPPSADSSSSAKL. The segment covering 106–122 has biased composition (polar residues); that stretch reads RGQPSGATDSQASTLET. The segment covering 124-135 has biased composition (low complexity); the sequence is SAPPSADSSSSA. Residues 147 to 446 form the Protein kinase domain; sequence YRVIGTLPAG…ASELLALPLF (300 aa). ATP is bound by residues 153–161 and K187; that span reads LPAGSFGKI. The active-site Proton acceptor is D281.

The protein belongs to the protein kinase superfamily. Ser/Thr protein kinase family. Post-translationally, phosphorylated by UL13 homolog; this phosphorylation regulates subsequent phosphorylation of UL31 and UL34 homologs by US3. Autophosphorylated.

The protein resides in the host cytoplasm. The protein localises to the host nucleus. It carries out the reaction L-seryl-[protein] + ATP = O-phospho-L-seryl-[protein] + ADP + H(+). It catalyses the reaction L-threonyl-[protein] + ATP = O-phospho-L-threonyl-[protein] + ADP + H(+). Multifunctional serine/threonine kinase that plays a role in several processes including egress of virus particles from the nucleus, modulation of the actin cytoskeleton and inhibition of apoptosis. Phosphorylates UL31 and UL34 homologs, two critical regulators of capsid budding from nucleus to endoplasmic reticulum, thereby facilitating virion egress. Modulates and redistributes host components of the nuclear envelope, including LMNA, emerin/EMD and the nuclear matrix protein MATR3. Phosphorylates envelope glycoprotein B (gB), probably to direct it to the cell surface. Promotes virus intracellular spread by restructuring host cell cytoskeleton. Blocks host apoptosis to extend cell survival and allow efficient viral replication. Promotes viral gene expression by phosphorylating host HDAC2 to reduce viral genome silencing. In Amazona oratrix (yellow-headed parrot), this protein is Protein kinase US3 homolog (US3).